Reading from the N-terminus, the 643-residue chain is Replication protein E1 (643 aa).

Positions 28-58 (THGQRQVSSDEDEDETETGEDLDFIDNRVPG) are disordered. Acidic residues predominate over residues 36 to 51 (SDEDEDETETGEDLDF). Residues 84–86 (KRK) carry the Nuclear localization signal motif. Residues serine 90 and serine 103 each carry the phosphoserine; by host modification. The Nuclear export signal signature appears at 102 to 111 (LSPRLDAISL). Disordered stretches follow at residues 119-138 (KRRL…TQMV) and 143-181 (EEVT…PQSG). The interval 180 to 346 (SGTDAAGSVL…QTLVGHSMED (167 aa)) is DNA-binding region. The SF3 helicase domain occupies 445–595 (VEFVSFLAAF…FPFASPGEPL (151 aa)). 471–478 (GPADTGKS) is a binding site for ATP. Lysine 552 participates in a covalent cross-link: Glycyl lysine isopeptide (Lys-Gly) (interchain with G-Cter in SUMO). Residues 617–643 (NSPEEQDDNGNTGEPFRCVPGDVARTV) are disordered.

Belongs to the papillomaviridae E1 protein family. In terms of assembly, can form hexamers. Interacts with E2 protein; this interaction increases E1 DNA binding specificity. Interacts with host DNA polymerase subunit POLA2. Interacts with host single stranded DNA-binding protein RPA1. Interacts with host TOP1; this interaction stimulates the enzymatic activity of TOP1. Phosphorylated. Post-translationally, sumoylated.

It localises to the host nucleus. The catalysed reaction is Couples ATP hydrolysis with the unwinding of duplex DNA by translocating in the 3'-5' direction.. The enzyme catalyses ATP + H2O = ADP + phosphate + H(+). In terms of biological role, ATP-dependent DNA 3'-5' helicase required for initiation of viral DNA replication. It forms a complex with the viral E2 protein. The E1-E2 complex binds to the replication origin which contains binding sites for both proteins. During the initial step, a dimer of E1 interacts with a dimer of protein E2 leading to a complex that binds the viral origin of replication with high specificity. Then, a second dimer of E1 displaces the E2 dimer in an ATP-dependent manner to form the E1 tetramer. Following this, two E1 monomers are added to each half of the site, which results in the formation of two E1 trimers on the viral ori. Subsequently, two hexamers will be created. The double hexamer acts as a bi-directional helicase machinery and unwinds the viral DNA and then recruits the host DNA polymerase to start replication. The sequence is that of Replication protein E1 from Human papillomavirus type 2a.